Reading from the N-terminus, the 154-residue chain is Large ribosomal subunit protein uL13 (154 aa).

This sequence belongs to the universal ribosomal protein uL13 family. In terms of assembly, part of the 50S ribosomal subunit.

In terms of biological role, this protein is one of the early assembly proteins of the 50S ribosomal subunit, although it is not seen to bind rRNA by itself. It is important during the early stages of 50S assembly. This Rhizobium rhizogenes (strain K84 / ATCC BAA-868) (Agrobacterium radiobacter) protein is Large ribosomal subunit protein uL13.